Here is a 345-residue protein sequence, read N- to C-terminus: Biotin synthase (345 aa).

A Radical SAM core domain is found at 38-256 (RQVQVSTLLS…IAVARIMMPS (219 aa)). The [4Fe-4S] cluster site is built by Cys53, Cys57, and Cys60. [2Fe-2S] cluster contacts are provided by Cys97, Cys128, Cys188, and Arg260.

It belongs to the radical SAM superfamily. Biotin synthase family. In terms of assembly, homodimer. Requires [4Fe-4S] cluster as cofactor. It depends on [2Fe-2S] cluster as a cofactor.

It catalyses the reaction (4R,5S)-dethiobiotin + (sulfur carrier)-SH + 2 reduced [2Fe-2S]-[ferredoxin] + 2 S-adenosyl-L-methionine = (sulfur carrier)-H + biotin + 2 5'-deoxyadenosine + 2 L-methionine + 2 oxidized [2Fe-2S]-[ferredoxin]. Its pathway is cofactor biosynthesis; biotin biosynthesis; biotin from 7,8-diaminononanoate: step 2/2. Catalyzes the conversion of dethiobiotin (DTB) to biotin by the insertion of a sulfur atom into dethiobiotin via a radical-based mechanism. The chain is Biotin synthase from Yersinia pestis bv. Antiqua (strain Antiqua).